A 501-amino-acid polypeptide reads, in one-letter code: ATP synthase subunit alpha, chloroplastic (501 aa).

170 to 177 (GDRQTGKT) is a binding site for ATP.

It belongs to the ATPase alpha/beta chains family. F-type ATPases have 2 components, CF(1) - the catalytic core - and CF(0) - the membrane proton channel. CF(1) has five subunits: alpha(3), beta(3), gamma(1), delta(1), epsilon(1). CF(0) has four main subunits: a, b, b' and c.

Its subcellular location is the plastid. The protein resides in the chloroplast thylakoid membrane. It catalyses the reaction ATP + H2O + 4 H(+)(in) = ADP + phosphate + 5 H(+)(out). Functionally, produces ATP from ADP in the presence of a proton gradient across the membrane. The alpha chain is a regulatory subunit. This Pisum sativum (Garden pea) protein is ATP synthase subunit alpha, chloroplastic.